The primary structure comprises 546 residues: CTP synthase (546 aa).

Residues 1–266 (MTTRYIFVTG…DQLVTKRFGI (266 aa)) are amidoligase domain. Ser-14 provides a ligand contact to CTP. A UTP-binding site is contributed by Ser-14. Residues 15–20 (SLGKGI) and Asp-72 each bind ATP. Mg(2+) contacts are provided by Asp-72 and Glu-140. CTP-binding positions include 147–149 (DIE), 187–192 (KTKPTQ), and Lys-223. Residues 187 to 192 (KTKPTQ) and Lys-223 each bind UTP. Position 239 to 241 (239 to 241 (KDV)) interacts with ATP. The Glutamine amidotransferase type-1 domain maps to 291–542 (TIGMVGKYIE…VAAAYTYQKR (252 aa)). Residue Gly-352 coordinates L-glutamine. Residue Cys-379 is the Nucleophile; for glutamine hydrolysis of the active site. Residues 380–383 (LGMQ), Glu-403, and Arg-470 contribute to the L-glutamine site. Residues His-515 and Glu-517 contribute to the active site.

This sequence belongs to the CTP synthase family. Homotetramer.

The catalysed reaction is UTP + L-glutamine + ATP + H2O = CTP + L-glutamate + ADP + phosphate + 2 H(+). It catalyses the reaction L-glutamine + H2O = L-glutamate + NH4(+). The enzyme catalyses UTP + NH4(+) + ATP = CTP + ADP + phosphate + 2 H(+). It functions in the pathway pyrimidine metabolism; CTP biosynthesis via de novo pathway; CTP from UDP: step 2/2. With respect to regulation, allosterically activated by GTP, when glutamine is the substrate; GTP has no effect on the reaction when ammonia is the substrate. The allosteric effector GTP functions by stabilizing the protein conformation that binds the tetrahedral intermediate(s) formed during glutamine hydrolysis. Inhibited by the product CTP, via allosteric rather than competitive inhibition. In terms of biological role, catalyzes the ATP-dependent amination of UTP to CTP with either L-glutamine or ammonia as the source of nitrogen. Regulates intracellular CTP levels through interactions with the four ribonucleotide triphosphates. In Shewanella halifaxensis (strain HAW-EB4), this protein is CTP synthase.